Here is a 355-residue protein sequence, read N- to C-terminus: MKKNKLELVYLRAFICVIIIVTHLLTQITLENEQMSDSSLILQYYIRNIFIFGTPSFIILSQLLTTLNYESVTINYLFSRFKYIFIPYLLIGLFYSYSESLITASSFKKQFIENVVLGQWYGYFIIIIMQFFVLSYIIYKINFRLFNSKILLLLAFIVQQSYLHYFLNNDTFHQFMTHYYPLSENTMILGWIFYFFLGGYIGYNYEKILSFLEKYLIIVIMLTLGAYVLFIAVSGSDYWNVTSFTYTLTLYNSVMFFLLLGVCMHFKTMLLNTIKAISAFSFFIYLLHPIILDSLFAYTNIFEDNTIVFLAISLLMILGICIGVGMMLREFYIFRFVIGKQPYKLQFDQYQPNWN.

A run of 10 helical transmembrane segments spans residues 13-30 (AFICVIIIVTHLLTQITL), 45-67 (YIRNIFIFGTPSFIILSQLLTTL), 74-96 (INYLFSRFKYIFIPYLLIGLFYS), 116-138 (VLGQWYGYFIIIIMQFFVLSYII), 145-167 (LFNSKILLLLAFIVQQSYLHYFL), 187-204 (MILGWIFYFFLGGYIGYN), 211-233 (FLEKYLIIVIMLTLGAYVLFIAV), 243-262 (SFTYTLTLYNSVMFFLLLGV), 269-291 (MLLNTIKAISAFSFFIYLLHPII), and 306-328 (TIVFLAISLLMILGICIGVGMML).

It belongs to the acyltransferase 3 family.

Its subcellular location is the cell membrane. Its function is as follows. Presumably involved in the export of the biofilm adhesin polysaccharide poly-beta-1,6-N-acetyl-D-glucosamine (PNAG, also referred to as PIA) across the cell membrane. This chain is Probable poly-beta-1,6-N-acetyl-D-glucosamine export protein (icaC), found in Staphylococcus epidermidis.